The chain runs to 323 residues: Small ribosomal subunit protein uS3 (323 aa).

The 70-residue stretch at 17-86 folds into the KH type-2 domain; that stretch reads IDEFFADELG…DPQIDVQEVD (70 aa). A disordered region spans residues 251-303; it reads ADPGVSSEDEEVVTEPVDIGGDDEDVEDIEVVSDDSGNDTETVAEEVEELDAE. Residues 270–303 are compositionally biased toward acidic residues; it reads GGDDEDVEDIEVVSDDSGNDTETVAEEVEELDAE.

The protein belongs to the universal ribosomal protein uS3 family. Part of the 30S ribosomal subunit.

Binds the lower part of the 30S subunit head. This Haloquadratum walsbyi (strain DSM 16790 / HBSQ001) protein is Small ribosomal subunit protein uS3.